The sequence spans 385 residues: Glucans biosynthesis protein C (385 aa).

The next 10 helical transmembrane spans lie at 17–37 (AWLM…SHTW), 60–80 (MQVF…RYPL), 91–111 (VGIP…IMLQ), 137–157 (ISHL…VWIF), 173–193 (KFSM…YAVI), 212–232 (FIVM…LAFI), 239–259 (LFTT…VAYL), 274–294 (TESV…FSFG), 311–331 (ASLF…AYIT), and 338–358 (WLGF…LYEI).

This sequence belongs to the acyltransferase 3 family. OpgC subfamily.

It is found in the cell membrane. It functions in the pathway glycan metabolism; osmoregulated periplasmic glucan (OPG) biosynthesis. Necessary for the succinyl substitution of periplasmic glucans. Could catalyze the transfer of succinyl residues from the cytoplasmic side of the membrane to the nascent glucan backbones on the periplasmic side of the membrane. The sequence is that of Glucans biosynthesis protein C from Escherichia coli O45:K1 (strain S88 / ExPEC).